Consider the following 878-residue polypeptide: Probable LRR receptor-like serine/threonine-protein kinase MEE39 (878 aa).

An N-terminal signal peptide occupies residues 1–25; sequence MKNLCWVFLSLFWFGVFLIIRFAEG. Residues 26-514 lie on the Extracellular side of the membrane; it reads QNQEGFISLD…IDKPKKKVAV (489 aa). N-linked (GlcNAc...) asparagine glycans are attached at residues N183, N203, N235, N290, N404, N418, N445, and N466. LRR repeat units lie at residues 413-436, 437-458, and 461-483; these read RIISLNLSSSGLSGTIVSNFQNLA, HLESLDLSNNSLSGIVPEFLAT, and SLLVINLSGNKLSGAIPQALRDR. A helical transmembrane segment spans residues 515–535; sequence KVVAPVASIAAIVVVILLFVF. The Cytoplasmic segment spans residues 536-878; the sequence is KKKMSSRNKP…FDTDVKPKAR (343 aa). T557 is subject to Phosphothreonine. Positions 566–840 constitute a Protein kinase domain; it reads KNLQRPLGEG…QVIINLKECL (275 aa). Residues 572-580 and K594 contribute to the ATP site; that span reads LGEGGFGVV. Y639 bears the Phosphotyrosine mark. Residue D691 is the Proton acceptor of the active site. Residue S726 is modified to Phosphoserine. Phosphothreonine occurs at positions 727 and 732. Position 740 is a phosphotyrosine (Y740). Polar residues predominate over residues 849–869; it reads RNNQNMDSGHSSDQLNVTVTF. The disordered stretch occupies residues 849–878; the sequence is RNNQNMDSGHSSDQLNVTVTFDTDVKPKAR.

The protein belongs to the protein kinase superfamily. Ser/Thr protein kinase family.

Its subcellular location is the membrane. The catalysed reaction is L-seryl-[protein] + ATP = O-phospho-L-seryl-[protein] + ADP + H(+). The enzyme catalyses L-threonyl-[protein] + ATP = O-phospho-L-threonyl-[protein] + ADP + H(+). In terms of biological role, receptor-like serine/threonine-kinase required during the endosperm development in seeds. The chain is Probable LRR receptor-like serine/threonine-protein kinase MEE39 (MEE39) from Arabidopsis thaliana (Mouse-ear cress).